The primary structure comprises 330 residues: MTLIVTGAAGFIGSNLVKALNERGEQRIIAVDNLTRADKFKNLVDCEIDDYLDKTEFVERFRRGDFGKVRAIFHEGACSDTMETDGRYMMDNNFRYSREVLDVCLAQNIQFLYASSAATYGGSSRFVEEREVEQPLNVYGYSKFLFDQVIRRVLPTAKSQIAGFRYFNVYGPRETHKARMASVAFHNFNQFRAEGKVKLFGEYNGYAAGEQTRDFVSVEDVVKVNLFFFDNPDKSGIFNLGSGRAQPFNDIASTVVNTLRSLNNEPALSLAEQVQRGLIEYISFPDALRGKYQCFTQADQSKLRAAGYDAPFLSVQEGVDRYVRWLFGQV.

Residues 11-12 (FI), 32-33 (DN), Lys-39, Lys-54, 75-79 (EGACS), and Asn-92 contribute to the NADP(+) site. The active-site Proton acceptor is Tyr-139. Lys-143 contacts NADP(+). A substrate-binding site is contributed by Asn-168. Val-169 and Lys-177 together coordinate NADP(+). Catalysis depends on Lys-177, which acts as the Proton acceptor. Substrate-binding positions include Arg-179, His-186, 200-203 (FGEY), Arg-213, and Tyr-292.

The protein belongs to the NAD(P)-dependent epimerase/dehydratase family. HldD subfamily. In terms of assembly, homopentamer. Requires NADP(+) as cofactor.

The enzyme catalyses ADP-D-glycero-beta-D-manno-heptose = ADP-L-glycero-beta-D-manno-heptose. It participates in nucleotide-sugar biosynthesis; ADP-L-glycero-beta-D-manno-heptose biosynthesis; ADP-L-glycero-beta-D-manno-heptose from D-glycero-beta-D-manno-heptose 7-phosphate: step 4/4. Its function is as follows. Catalyzes the interconversion between ADP-D-glycero-beta-D-manno-heptose and ADP-L-glycero-beta-D-manno-heptose via an epimerization at carbon 6 of the heptose. The polypeptide is ADP-L-glycero-D-manno-heptose-6-epimerase (Paraburkholderia xenovorans (strain LB400)).